The primary structure comprises 436 residues: Adenylosuccinate synthetase (436 aa).

GTP is bound by residues 12 to 18 (GDEGKGK) and 40 to 42 (GHT). The active-site Proton acceptor is Asp-13. Residues Asp-13 and Gly-40 each coordinate Mg(2+). IMP contacts are provided by residues 13-16 (DEGK), 38-41 (NAGH), Thr-128, Arg-142, Gln-223, Thr-238, and Arg-302. The active-site Proton donor is the His-41. Residue 298–304 (TTTGRRR) coordinates substrate. Residues Arg-304, 330–332 (KLD), and 412–414 (SLG) each bind GTP.

It belongs to the adenylosuccinate synthetase family. In terms of assembly, homodimer. The cofactor is Mg(2+).

The protein localises to the cytoplasm. It carries out the reaction IMP + L-aspartate + GTP = N(6)-(1,2-dicarboxyethyl)-AMP + GDP + phosphate + 2 H(+). It participates in purine metabolism; AMP biosynthesis via de novo pathway; AMP from IMP: step 1/2. Plays an important role in the de novo pathway of purine nucleotide biosynthesis. Catalyzes the first committed step in the biosynthesis of AMP from IMP. This is Adenylosuccinate synthetase from Prochlorococcus marinus (strain MIT 9515).